Reading from the N-terminus, the 766-residue chain is FYVE, RhoGEF and PH domain-containing protein 4 (766 aa).

The actin filament-binding stretch occupies residues 1–150 (MEESNPAPTS…SSIANSHDEN (150 aa)). Composition is skewed to polar residues over residues 47-62 (LNIPQTLGQPGLTSSP) and 70-85 (HSPQKQENDPDQTQGQ). Disordered stretches follow at residues 47–86 (LNIPQTLGQPGLTSSPPRKFLPQHSPQKQENDPDQTQGQH) and 143–173 (IANSHDENASDSSCRTPGTDLGLPSKEGEPG). A DH domain is found at 206 to 393 (KLHKIATELL…STAASHSNSA (188 aa)). Residues 422–521 (ELIKEGQILK…WIKALQESID (100 aa)) form the PH 1 domain. An FYVE-type zinc finger spans residues 559–619 (DNEVTMCMKC…VCKDCYQIIS (61 aa)). Residues C565, C568, C582, C585, C590, C593, C611, and C614 each contribute to the Zn(2+) site. Residues 643–740 (NSEVCSFLQY…WLKIILLAVT (98 aa)) enclose the PH 2 domain. Phosphoserine occurs at positions 702 and 716. A disordered region spans residues 746–766 (GPSEHLATLNNLPGPKKKSEC).

As to quaternary structure, homooligomer. Detected in thymus, lung, heart, skeletal muscle, small intestine, liver, kidney, spleen and testis. Expressed in all parts of the brain and in the spinal cord at embryonic, postnatal, and adult stages. Levels of expression are lower in postnatal and adult tissues than in embryonic tissues.

Its subcellular location is the cytoplasm. The protein localises to the cytoskeleton. The protein resides in the cell projection. It localises to the filopodium. Activates CDC42, a member of the Ras-like family of Rho- and Rac proteins, by exchanging bound GDP for free GTP. Activates MAPK8. Plays a role in regulating the actin cytoskeleton and cell shape. Promotes the formation of lamellipodia. This chain is FYVE, RhoGEF and PH domain-containing protein 4 (Fgd4), found in Mus musculus (Mouse).